We begin with the raw amino-acid sequence, 393 residues long: SH3 domain-binding protein 5-like (393 aa).

Residues 1–58 are disordered; sequence MAELRQVPGGRETPQGELRPEVVEDEVPRSPVAEEPGGGGSSSSEAKLSPREEEELDP. Residue Thr13 is modified to Phosphothreonine. The segment covering 18-28 has biased composition (basic and acidic residues); that stretch reads LRPEVVEDEVP. A phosphoserine mark is found at Ser30 and Ser49. 2 coiled-coil regions span residues 59-140 and 169-272; these read RIQE…YERA and WQEM…EQIH. Positions 273-332 are disordered; sequence ARRRGGLPPHPLGPRRSSPVGAEAGPEDMEDGDSGIEGAEGAGLEEGSSLGPGPAPDTDT. The span at 297–306 shows a compositional bias: acidic residues; sequence GPEDMEDGDS. Over residues 317 to 332 the composition is skewed to low complexity; the sequence is EEGSSLGPGPAPDTDT. A phosphoserine mark is found at Ser343, Ser350, Ser358, Ser362, and Ser378. Residues 362 to 393 are disordered; that stretch reads SLDGQELGTRSGGRRGSDGGARGGRHQRSVSL. Basic residues predominate over residues 384-393; that stretch reads GGRHQRSVSL.

The protein belongs to the SH3BP5 family.

Functionally, functions as a guanine nucleotide exchange factor (GEF) for RAB11A. This Homo sapiens (Human) protein is SH3 domain-binding protein 5-like (SH3BP5L).